Here is a 310-residue protein sequence, read N- to C-terminus: Protein N-terminal asparagine amidohydrolase (310 aa).

In terms of assembly, monomer.

It localises to the cytoplasm. It carries out the reaction N-terminal L-asparaginyl-[protein] + H2O + H(+) = N-terminal L-aspartyl-[protein] + NH4(+). Its activity is regulated as follows. Inhibited by micromolar concentrations of copper and zinc ions. N-terminal asparagine deamidase that mediates deamidation of N-terminal asparagine residues to aspartate. Required for the ubiquitin-dependent turnover of intracellular proteins that initiate with Met-Asn. These proteins are acetylated on the retained initiator methionine and can subsequently be modified by the removal of N-acetyl methionine by acylaminoacid hydrolase (AAH). Conversion of the resulting N-terminal asparagine to aspartate by NTAN1/PNAD renders the protein susceptible to arginylation, polyubiquitination and degradation as specified by the N-end rule. This enzyme does not act on substrates with internal or C-terminal asparagines and does not act on glutamine residues in any position, nor on acetylated N-terminal peptidyl Asn. This is Protein N-terminal asparagine amidohydrolase (NTAN1) from Homo sapiens (Human).